The sequence spans 365 residues: Histidinol-phosphate aminotransferase (365 aa).

The interval 1 to 22 (MSRPVPNPGILDIAPYTPGKSP) is disordered. At K221 the chain carries N6-(pyridoxal phosphate)lysine.

This sequence belongs to the class-II pyridoxal-phosphate-dependent aminotransferase family. Histidinol-phosphate aminotransferase subfamily. As to quaternary structure, homodimer. It depends on pyridoxal 5'-phosphate as a cofactor.

It carries out the reaction L-histidinol phosphate + 2-oxoglutarate = 3-(imidazol-4-yl)-2-oxopropyl phosphate + L-glutamate. The protein operates within amino-acid biosynthesis; L-histidine biosynthesis; L-histidine from 5-phospho-alpha-D-ribose 1-diphosphate: step 7/9. In Nitrobacter winogradskyi (strain ATCC 25391 / DSM 10237 / CIP 104748 / NCIMB 11846 / Nb-255), this protein is Histidinol-phosphate aminotransferase.